The sequence spans 307 residues: Pseudouridine-5'-phosphate glycosidase (307 aa).

The active-site Proton donor is the glutamate 28. The substrate site is built by lysine 89 and valine 109. Mn(2+) is bound at residue aspartate 141. A substrate-binding site is contributed by 143-145 (SAD). Lysine 162 serves as the catalytic Nucleophile.

The protein belongs to the pseudouridine-5'-phosphate glycosidase family. In terms of assembly, homotrimer. The cofactor is Mn(2+).

It catalyses the reaction D-ribose 5-phosphate + uracil = psi-UMP + H2O. Catalyzes the reversible cleavage of pseudouridine 5'-phosphate (PsiMP) to ribose 5-phosphate and uracil. Functions biologically in the cleavage direction, as part of a pseudouridine degradation pathway. The chain is Pseudouridine-5'-phosphate glycosidase from Staphylococcus aureus (strain MW2).